We begin with the raw amino-acid sequence, 113 residues long: Large ribosomal subunit protein uL22 (113 aa).

The protein belongs to the universal ribosomal protein uL22 family. In terms of assembly, part of the 50S ribosomal subunit.

This protein binds specifically to 23S rRNA; its binding is stimulated by other ribosomal proteins, e.g. L4, L17, and L20. It is important during the early stages of 50S assembly. It makes multiple contacts with different domains of the 23S rRNA in the assembled 50S subunit and ribosome. Functionally, the globular domain of the protein is located near the polypeptide exit tunnel on the outside of the subunit, while an extended beta-hairpin is found that lines the wall of the exit tunnel in the center of the 70S ribosome. This Anoxybacillus flavithermus (strain DSM 21510 / WK1) protein is Large ribosomal subunit protein uL22.